A 92-amino-acid polypeptide reads, in one-letter code: Small ribosomal subunit protein uS19c (92 aa).

Belongs to the universal ribosomal protein uS19 family.

It is found in the plastid. The protein localises to the chloroplast. In terms of biological role, protein S19 forms a complex with S13 that binds strongly to the 16S ribosomal RNA. The polypeptide is Small ribosomal subunit protein uS19c (Staurastrum punctulatum (Green alga)).